Reading from the N-terminus, the 101-residue chain is Urease subunit beta (101 aa).

This sequence belongs to the urease beta subunit family. As to quaternary structure, heterotrimer of UreA (gamma), UreB (beta) and UreC (alpha) subunits. Three heterotrimers associate to form the active enzyme.

It is found in the cytoplasm. The catalysed reaction is urea + 2 H2O + H(+) = hydrogencarbonate + 2 NH4(+). It participates in nitrogen metabolism; urea degradation; CO(2) and NH(3) from urea (urease route): step 1/1. In Ralstonia nicotianae (strain ATCC BAA-1114 / GMI1000) (Ralstonia solanacearum), this protein is Urease subunit beta.